Consider the following 96-residue polypeptide: Secreted RxLR effector protein 123 (96 aa).

Residues Met-1–Gly-22 form the signal peptide. A RxLR-dEER motif is present at residues Arg-49–Arg-70. A disordered region spans residues Pro-57–Glu-96. Over residues Pro-87–Glu-96 the composition is skewed to polar residues.

Belongs to the RxLR effector family.

Its subcellular location is the secreted. It is found in the host nucleus. The protein localises to the host cytoplasm. Functionally, secreted effector that dos not suppress the host cell death induced by cell death-inducing proteins. The protein is Secreted RxLR effector protein 123 of Plasmopara viticola (Downy mildew of grapevine).